Here is a 273-residue protein sequence, read N- to C-terminus: Undecaprenyl-diphosphatase (273 aa).

8 consecutive transmembrane segments (helical) span residues 4–24, 48–68, 89–109, 116–136, 152–172, 193–213, 222–242, and 252–272; these read MELW…FAPV, AANT…VVVF, LNLI…VLFE, LFST…MIAA, ITYK…WPGF, ADFT…LSLL, ADIP…LLAI, and IRLV…YFLY.

Belongs to the UppP family.

It is found in the cell membrane. It catalyses the reaction di-trans,octa-cis-undecaprenyl diphosphate + H2O = di-trans,octa-cis-undecaprenyl phosphate + phosphate + H(+). In terms of biological role, catalyzes the dephosphorylation of undecaprenyl diphosphate (UPP). Confers resistance to bacitracin. The chain is Undecaprenyl-diphosphatase from Geobacillus kaustophilus (strain HTA426).